The chain runs to 629 residues: 1-deoxy-D-xylulose-5-phosphate synthase (629 aa).

Thiamine diphosphate-binding positions include histidine 79 and 119-121 (SHA). Residue aspartate 150 coordinates Mg(2+). Thiamine diphosphate-binding positions include 151–152 (GS), asparagine 180, tyrosine 292, and glutamate 377. A Mg(2+)-binding site is contributed by asparagine 180.

Belongs to the transketolase family. DXPS subfamily. In terms of assembly, homodimer. Mg(2+) serves as cofactor. It depends on thiamine diphosphate as a cofactor.

The catalysed reaction is D-glyceraldehyde 3-phosphate + pyruvate + H(+) = 1-deoxy-D-xylulose 5-phosphate + CO2. The protein operates within metabolic intermediate biosynthesis; 1-deoxy-D-xylulose 5-phosphate biosynthesis; 1-deoxy-D-xylulose 5-phosphate from D-glyceraldehyde 3-phosphate and pyruvate: step 1/1. Functionally, catalyzes the acyloin condensation reaction between C atoms 2 and 3 of pyruvate and glyceraldehyde 3-phosphate to yield 1-deoxy-D-xylulose-5-phosphate (DXP). The sequence is that of 1-deoxy-D-xylulose-5-phosphate synthase from Tropheryma whipplei (strain TW08/27) (Whipple's bacillus).